The sequence spans 317 residues: Transaldolase (317 aa).

The active-site Schiff-base intermediate with substrate is the K132.

This sequence belongs to the transaldolase family. Type 1 subfamily. In terms of assembly, homodimer.

It is found in the cytoplasm. The catalysed reaction is D-sedoheptulose 7-phosphate + D-glyceraldehyde 3-phosphate = D-erythrose 4-phosphate + beta-D-fructose 6-phosphate. It functions in the pathway carbohydrate degradation; pentose phosphate pathway; D-glyceraldehyde 3-phosphate and beta-D-fructose 6-phosphate from D-ribose 5-phosphate and D-xylulose 5-phosphate (non-oxidative stage): step 2/3. Its function is as follows. Transaldolase is important for the balance of metabolites in the pentose-phosphate pathway. This is Transaldolase (talB) from Escherichia coli O104:H4 (strain 2009EL-2071).